Here is a 333-residue protein sequence, read N- to C-terminus: Protoheme IX farnesyltransferase (333 aa).

7 helical membrane passes run 64–84 (LICT…LNCL), 110–130 (TVFL…VSGV), 133–153 (LAAG…TVIL), 161–181 (IVFG…AATG), 189–209 (WLFG…AILL), 246–266 (IMGV…LLPF), and 287–307 (AKSL…LLLI).

The protein belongs to the UbiA prenyltransferase family. Protoheme IX farnesyltransferase subfamily.

The protein localises to the cell inner membrane. The catalysed reaction is heme b + (2E,6E)-farnesyl diphosphate + H2O = Fe(II)-heme o + diphosphate. It participates in porphyrin-containing compound metabolism; heme O biosynthesis; heme O from protoheme: step 1/1. Functionally, converts heme B (protoheme IX) to heme O by substitution of the vinyl group on carbon 2 of heme B porphyrin ring with a hydroxyethyl farnesyl side group. The sequence is that of Protoheme IX farnesyltransferase from Prochlorococcus marinus (strain MIT 9215).